The sequence spans 318 residues: Cobalamin biosynthesis protein CobD (318 aa).

5 consecutive transmembrane segments (helical) span residues 51 to 71 (VGGV…AWGA), 77 to 97 (LVHP…CLAA), 153 to 173 (DGVI…ALAY), 206 to 226 (LIPA…AGLS), and 296 to 316 (MYGA…ILTI).

The protein belongs to the CobD/CbiB family.

It localises to the cell membrane. Its pathway is cofactor biosynthesis; adenosylcobalamin biosynthesis. Functionally, converts cobyric acid to cobinamide by the addition of aminopropanol on the F carboxylic group. This chain is Cobalamin biosynthesis protein CobD, found in Geobacter metallireducens (strain ATCC 53774 / DSM 7210 / GS-15).